Here is a 325-residue protein sequence, read N- to C-terminus: Tartrate-resistant acid phosphatase type 5 (325 aa).

The N-terminal stretch at 1 to 21 (MDMWTALLILQALLLPSLADG) is a signal peptide. Residues Asp-33, Asp-71, Tyr-74, and Asn-110 each coordinate Fe cation. 2 N-linked (GlcNAc...) asparagine glycosylation sites follow: Asn-116 and Asn-147. Residues Cys-161 and Cys-219 are joined by a disulfide bond. Fe cation contacts are provided by His-205, His-240, and His-242.

This sequence belongs to the metallophosphoesterase superfamily. Purple acid phosphatase family. Exists either as monomer or, after proteolytic processing, as a dimer of two chains linked by disulfide bond(s). The cofactor is Fe cation.

The protein localises to the lysosome. It carries out the reaction a phosphate monoester + H2O = an alcohol + phosphate. In terms of biological role, involved in osteopontin/bone sialoprotein dephosphorylation. Its expression seems to increase in certain pathological states such as Gaucher and Hodgkin diseases, the hairy cell, the B-cell, and the T-cell leukemias. This Homo sapiens (Human) protein is Tartrate-resistant acid phosphatase type 5 (ACP5).